The primary structure comprises 1016 residues: Vacuolar membrane protease (1016 aa).

Positions 1–36 (MAETESGTGNSPSHRLSETSNASGNRSHQQSKQIAS) are disordered. The Cytoplasmic portion of the chain corresponds to 1-57 (MAETESGTGNSPSHRLSETSNASGNRSHQQSKQIASYKSSKPNVFIRFIRAIFGYRK). A helical membrane pass occupies residues 58–78 (TSVTLFVFITIIATLILVELS). Topologically, residues 79-408 (NSLDFSVKLP…FVIPASQLVL (330 aa)) are vacuolar. 2 N-linked (GlcNAc...) asparagine glycosylation sites follow: asparagine 147 and asparagine 177. Zn(2+) is bound by residues histidine 191 and aspartate 203. The Proton acceptor role is filled by glutamate 238. Glutamate 239, glutamate 264, and histidine 337 together coordinate Zn(2+). The chain crosses the membrane as a helical span at residues 409-429 (INVTCLAVIPLISLPLLVIIF). The Cytoplasmic portion of the chain corresponds to 430-438 (NYKKNWHIG). Residues 439–459 (FINAIKFPVSLVLSICILNII) form a helical membrane-spanning segment. The Vacuolar portion of the chain corresponds to 460 to 481 (THNVIASINEFLPNSSYDSIVS). N-linked (GlcNAc...) asparagine glycosylation is present at asparagine 473. The chain crosses the membrane as a helical span at residues 482 to 502 (TLYSLFLLLNYLFLNGINFIF). Topologically, residues 503-511 (KGYKGLYHD) are cytoplasmic. A helical membrane pass occupies residues 512–532 (EKLILIIQTSFIYWVLLIVST). Residues 533-547 (NKLSKNKIGNDHTGE) lie on the Vacuolar side of the membrane. A helical transmembrane segment spans residues 548-568 (FPLIMLFLLQSIGALFGLFSW). Over 569-646 (SFKKTTPDEL…SFSYDWSIQY (78 aa)) the chain is Cytoplasmic. Residues 598-622 (YGSNEAELESGEPISSNSSVSLNSS) form a disordered region. A compositionally biased stretch (low complexity) spans 612-622 (SSNSSVSLNSS). Residues 647-667 (VVIVPLSSLIVYNTGSLLLSG) traverse the membrane as a helical segment. The Vacuolar portion of the chain corresponds to 668-681 (LNKSIQESLNAEKL). A glycan (N-linked (GlcNAc...) asparagine) is linked at asparagine 669. Residues 682-702 (IFDLIQLVAVTLAIPFLPFIF) form a helical membrane-spanning segment. The Cytoplasmic portion of the chain corresponds to 703 to 706 (KINR). Residues 707–727 (LLVTALVLVFCSGFISIFLKS) traverse the membrane as a helical segment. The Vacuolar segment spans residues 728-1016 (PFDQLNPLKL…LVSVSKYVEI (289 aa)). N-linked (GlcNAc...) asparagine glycans are attached at residues asparagine 778, asparagine 821, asparagine 850, asparagine 875, and asparagine 977.

It belongs to the peptidase M28 family. Zn(2+) is required as a cofactor.

Its subcellular location is the vacuole membrane. May be involved in vacuolar sorting and osmoregulation. The chain is Vacuolar membrane protease from Debaryomyces hansenii (strain ATCC 36239 / CBS 767 / BCRC 21394 / JCM 1990 / NBRC 0083 / IGC 2968) (Yeast).